Here is a 397-residue protein sequence, read N- to C-terminus: Phosphoglycerate kinase (397 aa).

Substrate contacts are provided by residues 21-23 (DFN), R37, 60-63 (HLGR), R119, and R152. Residues K203, G294, E325, and 354-357 (GGDS) each bind ATP.

Belongs to the phosphoglycerate kinase family. Monomer.

The protein localises to the cytoplasm. The catalysed reaction is (2R)-3-phosphoglycerate + ATP = (2R)-3-phospho-glyceroyl phosphate + ADP. It functions in the pathway carbohydrate degradation; glycolysis; pyruvate from D-glyceraldehyde 3-phosphate: step 2/5. In Chlorobium phaeovibrioides (strain DSM 265 / 1930) (Prosthecochloris vibrioformis (strain DSM 265)), this protein is Phosphoglycerate kinase.